A 160-amino-acid chain; its full sequence is Transcription antitermination protein NusB (160 aa).

The protein belongs to the NusB family.

Functionally, involved in transcription antitermination. Required for transcription of ribosomal RNA (rRNA) genes. Binds specifically to the boxA antiterminator sequence of the ribosomal RNA (rrn) operons. In Rhizobium leguminosarum bv. trifolii (strain WSM2304), this protein is Transcription antitermination protein NusB.